The following is a 464-amino-acid chain: Trehalose-6-phosphate synthase (464 aa).

Arg10 serves as a coordination point for D-glucose 6-phosphate. 23–24 (GG) lines the UDP-alpha-D-glucose pocket. The D-glucose 6-phosphate site is built by Tyr81 and Asp135. UDP-alpha-D-glucose is bound by residues Arg268 and Lys273. Arg306 provides a ligand contact to D-glucose 6-phosphate. A UDP-alpha-D-glucose-binding site is contributed by 371 to 375 (LVAKE).

It belongs to the glycosyltransferase 20 family. As to quaternary structure, homotetramer.

It carries out the reaction D-glucose 6-phosphate + UDP-alpha-D-glucose = alpha,alpha-trehalose 6-phosphate + UDP + H(+). It participates in glycan biosynthesis; trehalose biosynthesis. Functionally, probably involved in the osmoprotection via the biosynthesis of trehalose. Catalyzes the transfer of glucose from UDP-alpha-D-glucose (UDP-Glc) to D-glucose 6-phosphate (Glc-6-P) to form trehalose-6-phosphate. Acts with retention of the anomeric configuration of the UDP-sugar donor. This chain is Trehalose-6-phosphate synthase, found in Sinorhizobium fredii (strain NBRC 101917 / NGR234).